Here is an 883-residue protein sequence, read N- to C-terminus: Valine--tRNA ligase (883 aa).

The short motif at 51–61 (PNVTGKLHLGH) is the 'HIGH' region element. The short motif at 527-531 (KMSKS) is the 'KMSKS' region element. Lys530 is an ATP binding site. The stretch at 811-847 (LEALIDLNVEIARLEKELEKWNKEVARVQGKLNNERF) forms a coiled coil.

Belongs to the class-I aminoacyl-tRNA synthetase family. ValS type 1 subfamily. As to quaternary structure, monomer.

The protein resides in the cytoplasm. The enzyme catalyses tRNA(Val) + L-valine + ATP = L-valyl-tRNA(Val) + AMP + diphosphate. Its function is as follows. Catalyzes the attachment of valine to tRNA(Val). As ValRS can inadvertently accommodate and process structurally similar amino acids such as threonine, to avoid such errors, it has a 'posttransfer' editing activity that hydrolyzes mischarged Thr-tRNA(Val) in a tRNA-dependent manner. The chain is Valine--tRNA ligase from Listeria monocytogenes serovar 1/2a (strain ATCC BAA-679 / EGD-e).